The primary structure comprises 31 residues: uncharacterized protein (31 aa).

Residues 7–29 traverse the membrane as a helical segment; sequence TVVLINFFAAVGLFTLISMRFGW.

The protein localises to the cell inner membrane. This is an uncharacterized protein from Escherichia coli (strain K12).